Here is a 314-residue protein sequence, read N- to C-terminus: Putative glycosyltransferase ORF31 (314 aa).

Belongs to the glycosyltransferase group 1 family.

This chain is Putative glycosyltransferase ORF31, found in Haloarcula hispanica (His1V).